The chain runs to 181 residues: 6,7-dimethyl-8-ribityllumazine synthase 2 (181 aa).

The segment at 1-23 (MSLPMTETVTDPAETAPPTAERS) is disordered. Residues W40, 74–76 (SFE), 98–100 (LVV), and S129 each bind 5-amino-6-(D-ribitylamino)uracil.

Belongs to the DMRL synthase family.

The enzyme catalyses (2S)-2-hydroxy-3-oxobutyl phosphate + 5-amino-6-(D-ribitylamino)uracil = 6,7-dimethyl-8-(1-D-ribityl)lumazine + phosphate + 2 H2O + H(+). Its pathway is cofactor biosynthesis; riboflavin biosynthesis; riboflavin from 2-hydroxy-3-oxobutyl phosphate and 5-amino-6-(D-ribitylamino)uracil: step 1/2. Its function is as follows. Catalyzes the formation of 6,7-dimethyl-8-ribityllumazine by condensation of 5-amino-6-(D-ribitylamino)uracil with 3,4-dihydroxy-2-butanone 4-phosphate. This is the penultimate step in the biosynthesis of riboflavin. The sequence is that of 6,7-dimethyl-8-ribityllumazine synthase 2 from Rhodopseudomonas palustris (strain ATCC BAA-98 / CGA009).